We begin with the raw amino-acid sequence, 162 residues long: Nucleotide-binding protein SCO4614 (162 aa).

This sequence belongs to the YajQ family.

The protein localises to the cytoplasm. The protein resides in the nucleoid. Its function is as follows. Nucleotide-binding protein. In Streptomyces coelicolor (strain ATCC BAA-471 / A3(2) / M145), this protein is Nucleotide-binding protein SCO4614.